We begin with the raw amino-acid sequence, 206 residues long: Holliday junction branch migration complex subunit RuvA (206 aa).

The domain I stretch occupies residues 1 to 63 (MISSLRGDVI…DDAHTLYAFS (63 aa)). A domain II region spans residues 64 to 142 (TSEQRETFGI…ALEATSGQAT (79 aa)). The interval 143-150 (IGDIAATG) is flexible linker. The interval 151 to 206 (NDTALQSQVVEALVGLGFTEAKAATAVKKILEEQNGTTDPSSVLREALQRLSGQKR) is domain III.

It belongs to the RuvA family. Homotetramer. Forms an RuvA(8)-RuvB(12)-Holliday junction (HJ) complex. HJ DNA is sandwiched between 2 RuvA tetramers; dsDNA enters through RuvA and exits via RuvB. An RuvB hexamer assembles on each DNA strand where it exits the tetramer. Each RuvB hexamer is contacted by two RuvA subunits (via domain III) on 2 adjacent RuvB subunits; this complex drives branch migration. In the full resolvosome a probable DNA-RuvA(4)-RuvB(12)-RuvC(2) complex forms which resolves the HJ.

It is found in the cytoplasm. Functionally, the RuvA-RuvB-RuvC complex processes Holliday junction (HJ) DNA during genetic recombination and DNA repair, while the RuvA-RuvB complex plays an important role in the rescue of blocked DNA replication forks via replication fork reversal (RFR). RuvA specifically binds to HJ cruciform DNA, conferring on it an open structure. The RuvB hexamer acts as an ATP-dependent pump, pulling dsDNA into and through the RuvAB complex. HJ branch migration allows RuvC to scan DNA until it finds its consensus sequence, where it cleaves and resolves the cruciform DNA. The polypeptide is Holliday junction branch migration complex subunit RuvA (Corynebacterium urealyticum (strain ATCC 43042 / DSM 7109)).